The chain runs to 929 residues: Ras guanine nucleotide exchange factor M (929 aa).

Residues 1-15 (MWQKPSLTKSMMNEV) are compositionally biased toward polar residues. 2 disordered regions span residues 1–102 (MWQK…AAGS) and 169–316 (TNNN…SKSL). The span at 16–33 (SSNSPKSPTLTSSPSTQS) shows a compositional bias: low complexity. Gly residues predominate over residues 44 to 67 (LDGGGGGSNRLIFGGSGGGSGGGS). Low complexity-rich tracts occupy residues 68–80 (LPSSPVSSPVNPF) and 169–191 (TNNNTTTTTNTNNSNNNNSNNDG). The span at 192 to 202 (SGSGSGAGGSF) shows a compositional bias: gly residues. Over residues 203 to 246 (IGTTTSAKTTSTTSTSAATTTTTTTTSSSSSSPSSSSPSSTSPT) the composition is skewed to low complexity. Polar residues predominate over residues 247–256 (IASNNDNNNK). Over residues 270–287 (PPLTLSQSQTQQQQQQKV) the composition is skewed to low complexity. Residues 295 to 305 (RFSTNSSGSQS) are compositionally biased toward polar residues. Positions 390 to 528 (NKFVVVSGPK…PILDLYEKLK (139 aa)) constitute an N-terminal Ras-GEF domain. A disordered region spans residues 540 to 583 (SLSGSGGISNNNNGSDLKNSNNGNNSSNNNNSSSNSSSSSSSSD). In terms of domain architecture, Ras-GEF spans 676–911 (SPQDIAKQLT…YAFSKFIESP (236 aa)).

Its function is as follows. Promotes the exchange of Ras-bound GDP by GTP. The chain is Ras guanine nucleotide exchange factor M (gefM) from Dictyostelium discoideum (Social amoeba).